A 39-amino-acid chain; its full sequence is L-amino-acid oxidase (39 aa).

The protein belongs to the flavin monoamine oxidase family. FIG1 subfamily. As to quaternary structure, monomer. This is in contrast with most of its orthologs, that are non-covalently linked homodimers. The cofactor is FAD. N-glycosylated. As to expression, expressed by the venom gland.

It is found in the secreted. The catalysed reaction is an L-alpha-amino acid + O2 + H2O = a 2-oxocarboxylate + H2O2 + NH4(+). It catalyses the reaction L-leucine + O2 + H2O = 4-methyl-2-oxopentanoate + H2O2 + NH4(+). Catalyzes an oxidative deamination of predominantly hydrophobic and aromatic L-amino acids, thus producing hydrogen peroxide that may contribute to the diverse toxic effects of this enzyme. Shows activity on L-Leu. Exhibits diverse biological activities, such as hemorrhage, hemolysis, edema, apoptosis of vascular endothelial cells or tumor cell lines, and antiparasitic activities, as well as regulation of platelet aggregation. Effects of snake L-amino oxidases on platelets are controversial, since they either induce aggregation or inhibit agonist-induced aggregation. These different effects are probably due to different experimental conditions. In addition, this protein inhibits dose-dependently the growth of Gram-positive, Gram-negative bacteria and yeast, probably by the generation of hydrogen peroxide. The protein is L-amino-acid oxidase of Bothrops marajoensis (Marajo lancehead).